The chain runs to 154 residues: MSEHERTFVMVKPDGVQRGLIGDIVSRFEDRGLKMVGGKFMQIDQELAEEHYGEHEDKPFFDGLVDFITSGPVFAMVWEGQDATRQVRTMMGETDPAESAPGTIRGDYGLDLGRNVIHGSDHEDEGANEREIELFFDEAELVDWDQIDSSWLYE.

Residues K12, F60, R88, T94, R105, and N115 each coordinate ATP. H118 acts as the Pros-phosphohistidine intermediate in catalysis.

Belongs to the NDK family. Mg(2+) serves as cofactor.

The protein localises to the cytoplasm. It catalyses the reaction a 2'-deoxyribonucleoside 5'-diphosphate + ATP = a 2'-deoxyribonucleoside 5'-triphosphate + ADP. The enzyme catalyses a ribonucleoside 5'-diphosphate + ATP = a ribonucleoside 5'-triphosphate + ADP. Functionally, major role in the synthesis of nucleoside triphosphates other than ATP. The ATP gamma phosphate is transferred to the NDP beta phosphate via a ping-pong mechanism, using a phosphorylated active-site intermediate. The protein is Nucleoside diphosphate kinase of Haloarcula marismortui (strain ATCC 43049 / DSM 3752 / JCM 8966 / VKM B-1809) (Halobacterium marismortui).